Here is a 138-residue protein sequence, read N- to C-terminus: Centromere protein S (138 aa).

Residue M1 is modified to N-acetylmethionine. The tract at residues 110-138 (RKAQKKKKSEDGSKNSRQPAEAGVVESEN) is disordered.

This sequence belongs to the TAF9 family. CENP-S/MHF1 subfamily. As to quaternary structure, heterodimer with CENPX, sometimes called MHF; this interaction stabilizes both partners. MHF heterodimers can assemble to form tetrameric structures. MHF also coassemble with CENPT-CENPW heterodimers at centromeres to form the tetrameric CENP-T-W-S-X complex. Forms a discrete complex with FANCM and CENPX, called FANCM-MHF; this interaction, probably mediated by direct binding between CENPS and FANCM, leads to synergistic activation of double-stranded DNA binding and strongly stimulates FANCM-mediated DNA remodeling. Recruited by FANCM to the Fanconi anemia (FA) core complex, which consists of CENPS, CENPX, FANCA, FANCB, FANCC, FANCE, FANCF, FANCG, FANCL, FANCM, FAAP24 and FAAP100. The FA core complex associates with Bloom syndrome (BLM) complex, which consists of at least BLM, DNA topoisomerase 3-alpha (TOP3A), RMI1/BLAP75, RPA1/RPA70 and RPA2/RPA32. The super complex between FA and BLM is called BRAFT. Component of the CENPA-CAD complex, composed of CENPI, CENPK, CENPL, CENPO, CENPP, CENPQ, CENPR and CENPS. The CENPA-CAD complex is probably recruited on centromeres by the CENPA-NAC complex, composed of at least CENPA, CENPC, CENPH, CENPM, CENPN, CENPT and CENPU. Ubiquitously expressed.

The protein localises to the nucleus. The protein resides in the chromosome. It is found in the centromere. It localises to the kinetochore. In terms of biological role, DNA-binding component of the Fanconi anemia (FA) core complex. Required for the normal activation of the FA pathway, leading to monoubiquitination of the FANCI-FANCD2 complex in response to DNA damage, cellular resistance to DNA cross-linking drugs, and prevention of chromosomal breakage. In complex with CENPX (MHF heterodimer), crucial cofactor for FANCM in both binding and ATP-dependent remodeling of DNA. Stabilizes FANCM. In complex with CENPX and FANCM (but not other FANC proteins), rapidly recruited to blocked forks and promotes gene conversion at blocked replication forks. In complex with CENPT, CENPW and CENPX (CENP-T-W-S-X heterotetramer), involved in the formation of a functional kinetochore outer plate, which is essential for kinetochore-microtubule attachment and faithful mitotic progression. As a component of MHF and CENP-T-W-S-X complexes, binds DNA and bends it to form a nucleosome-like structure. DNA-binding function is fulfilled in the presence of CENPX, with the following preference for DNA substates: Holliday junction &gt; double-stranded &gt; splay arm &gt; single-stranded. Does not bind DNA on its own. The polypeptide is Centromere protein S (CENPS) (Homo sapiens (Human)).